Reading from the N-terminus, the 898-residue chain is Protein SOV1, mitochondrial (898 aa).

Residues 1 to 31 (MFKYNRSLCSSALIAKSQIRFYRLKRAPLNY) constitute a mitochondrion transit peptide.

It localises to the mitochondrion. The chain is Protein SOV1, mitochondrial (SOV1) from Saccharomyces cerevisiae (strain ATCC 204508 / S288c) (Baker's yeast).